The chain runs to 93 residues: Integration host factor subunit beta (93 aa).

Belongs to the bacterial histone-like protein family. As to quaternary structure, heterodimer of an alpha and a beta chain.

This protein is one of the two subunits of integration host factor, a specific DNA-binding protein that functions in genetic recombination as well as in transcriptional and translational control. The sequence is that of Integration host factor subunit beta from Actinobacillus pleuropneumoniae serotype 7 (strain AP76).